The following is a 180-amino-acid chain: Large ribosomal subunit protein uL5 (180 aa).

It belongs to the universal ribosomal protein uL5 family. In terms of assembly, part of the 50S ribosomal subunit; part of the 5S rRNA/L5/L18/L25 subcomplex. Contacts the 5S rRNA and the P site tRNA. Forms a bridge to the 30S subunit in the 70S ribosome.

This is one of the proteins that bind and probably mediate the attachment of the 5S RNA into the large ribosomal subunit, where it forms part of the central protuberance. In the 70S ribosome it contacts protein S13 of the 30S subunit (bridge B1b), connecting the 2 subunits; this bridge is implicated in subunit movement. Contacts the P site tRNA; the 5S rRNA and some of its associated proteins might help stabilize positioning of ribosome-bound tRNAs. The protein is Large ribosomal subunit protein uL5 of Lacticaseibacillus casei (strain BL23) (Lactobacillus casei).